A 717-amino-acid chain; its full sequence is DNA ligase (717 aa).

NAD(+) contacts are provided by residues 44-48 (DADYD), 93-94 (SL), and Glu127. The active-site N6-AMP-lysine intermediate is Lys129. Residues Arg150, Glu186, Lys302, and Lys326 each contribute to the NAD(+) site. Residues Cys431, Cys434, Cys455, and Cys461 each contribute to the Zn(2+) site. The region spanning 639–717 (STDSPVAGKT…EDEWLALIGG (79 aa)) is the BRCT domain.

It belongs to the NAD-dependent DNA ligase family. LigA subfamily. Requires Mg(2+) as cofactor. Mn(2+) serves as cofactor.

The catalysed reaction is NAD(+) + (deoxyribonucleotide)n-3'-hydroxyl + 5'-phospho-(deoxyribonucleotide)m = (deoxyribonucleotide)n+m + AMP + beta-nicotinamide D-nucleotide.. In terms of biological role, DNA ligase that catalyzes the formation of phosphodiester linkages between 5'-phosphoryl and 3'-hydroxyl groups in double-stranded DNA using NAD as a coenzyme and as the energy source for the reaction. It is essential for DNA replication and repair of damaged DNA. This Sinorhizobium fredii (strain NBRC 101917 / NGR234) protein is DNA ligase.